Consider the following 706-residue polypeptide: Polyribonucleotide nucleotidyltransferase (706 aa).

Mg(2+) is bound by residues aspartate 486 and aspartate 492. The KH domain maps to 553–612 (PRIYTMKINPEKIKDVIGKGGSVIRALTDETGTTIEIEDDGTIKIAATDGDKAKHAIRRI). In terms of domain architecture, S1 motif spans 622–690 (NRIYAGKVTR…RQGRIRLSMK (69 aa)).

This sequence belongs to the polyribonucleotide nucleotidyltransferase family. In terms of assembly, component of the RNA degradosome, which is a multiprotein complex involved in RNA processing and mRNA degradation. Mg(2+) serves as cofactor.

The protein localises to the cytoplasm. It catalyses the reaction RNA(n+1) + phosphate = RNA(n) + a ribonucleoside 5'-diphosphate. In terms of biological role, involved in mRNA degradation. Catalyzes the phosphorolysis of single-stranded polyribonucleotides processively in the 3'- to 5'-direction. The chain is Polyribonucleotide nucleotidyltransferase from Yersinia enterocolitica serotype O:8 / biotype 1B (strain NCTC 13174 / 8081).